We begin with the raw amino-acid sequence, 704 residues long: Eukaryotic translation initiation factor 2-alpha kinase 1 (704 aa).

Residues 224-667 enclose the Protein kinase domain; that stretch reads FEELELLGKG…LTSNLFHDLV (444 aa). ATP contacts are provided by residues 230-238 and Lys253; that span reads LGKGGYGSV. The active-site Proton acceptor is Asp491.

Belongs to the protein kinase superfamily. Ser/Thr protein kinase family. GCN2 subfamily. Autophosphorylated.

The catalysed reaction is L-seryl-[protein] + ATP = O-phospho-L-seryl-[protein] + ADP + H(+). It catalyses the reaction L-threonyl-[protein] + ATP = O-phospho-L-threonyl-[protein] + ADP + H(+). Mediates down-regulation of protein synthesis in response to stress conditions by the phosphorylation of the alpha subunit of eIF-2 (tif211) on 'Ser-52'. Protein synthesis is inhibited at the level of initiation. Activity is inhibited in the presence of heme. The chain is Eukaryotic translation initiation factor 2-alpha kinase 1 (hri1) from Schizosaccharomyces pombe (strain 972 / ATCC 24843) (Fission yeast).